Consider the following 319-residue polypeptide: Protein sprouty homolog 1 (319 aa).

Met-1 is subject to N-acetylmethionine. Residues Thr-54 to Gln-160 form a disordered region. A compositionally biased stretch (basic and acidic residues) spans Pro-69 to Glu-79. A compositionally biased stretch (low complexity) spans Ser-112–Ser-131. Positions Gln-183–Cys-295 constitute an SPR domain.

Belongs to the sprouty family. As to quaternary structure, forms heterodimers with SPRY2. Interacts with TESK1. Interacts with CAV1 (via C-terminus).

The protein resides in the cytoplasm. Its subcellular location is the membrane. Inhibits fibroblast growth factor (FGF)-induced retinal lens fiber differentiation, probably by inhibiting FGF-mediated phosphorylation of ERK1/2. Inhibits TGFB-induced epithelial-to-mesenchymal transition in lens epithelial cells. In Cervus elaphus (Red deer), this protein is Protein sprouty homolog 1 (SPRY1).